The sequence spans 227 residues: Protein Saci_0792 (227 aa).

In terms of domain architecture, AMMECR1 spans 15–209 (DIGKQLIKIA…EINKNTDEII (195 aa)).

This is Protein Saci_0792 from Sulfolobus acidocaldarius (strain ATCC 33909 / DSM 639 / JCM 8929 / NBRC 15157 / NCIMB 11770).